The sequence spans 375 residues: Alcohol dehydrogenase B (375 aa).

Cys40, His62, Cys92, Cys95, Cys98, Cys106, and Cys169 together coordinate Zn(2+).

Belongs to the zinc-containing alcohol dehydrogenase family. Zn(2+) is required as a cofactor.

It localises to the cytoplasm. It carries out the reaction a primary alcohol + NAD(+) = an aldehyde + NADH + H(+). The enzyme catalyses a secondary alcohol + NAD(+) = a ketone + NADH + H(+). This Mycobacterium bovis (strain ATCC BAA-935 / AF2122/97) protein is Alcohol dehydrogenase B (adhB).